Reading from the N-terminus, the 310-residue chain is Glutarate 2-hydroxylase (310 aa).

Fe cation contacts are provided by histidine 160, aspartate 162, and histidine 277.

The protein belongs to the glutarate hydroxylase family. Homotetramer. It depends on Fe(2+) as a cofactor.

The enzyme catalyses glutarate + 2-oxoglutarate + O2 = (S)-2-hydroxyglutarate + succinate + CO2. It participates in amino-acid degradation. Functionally, acts as an alpha-ketoglutarate-dependent dioxygenase catalyzing hydroxylation of glutarate (GA) to L-2-hydroxyglutarate (L2HG). Functions in a L-lysine degradation pathway that proceeds via cadaverine, glutarate and L-2-hydroxyglutarate. The protein is Glutarate 2-hydroxylase of Shigella flexneri.